We begin with the raw amino-acid sequence, 382 residues long: D-galactonate dehydratase (382 aa).

D183 provides a ligand contact to Mg(2+). The active-site Proton donor is the H185. E209 and E235 together coordinate Mg(2+). The active-site Proton acceptor is H285. Positions 361 to 382 (NENPPDWRNPVWRHSDGSIAEW) are disordered.

Belongs to the mandelate racemase/muconate lactonizing enzyme family. GalD subfamily. It depends on Mg(2+) as a cofactor.

The catalysed reaction is D-galactonate = 2-dehydro-3-deoxy-D-galactonate + H2O. It functions in the pathway carbohydrate acid metabolism; D-galactonate degradation; D-glyceraldehyde 3-phosphate and pyruvate from D-galactonate: step 1/3. Catalyzes the dehydration of D-galactonate to 2-keto-3-deoxy-D-galactonate. This chain is D-galactonate dehydratase, found in Xanthomonas oryzae pv. oryzae (strain MAFF 311018).